The following is a 440-amino-acid chain: Chromosomal replication initiator protein DnaA (440 aa).

Residues 1–69 (MKERILQEIK…VKVVLGNDAT (69 aa)) are domain I, interacts with DnaA modulators. The tract at residues 69–96 (TFEITYEAFEPHSSYSEPLVKKRAVLLT) is domain II. Positions 97–313 (PLNPDYTFEN…GAIIKLLVYK (217 aa)) are domain III, AAA+ region. 4 residues coordinate ATP: G140, G142, K143, and T144. The domain IV, binds dsDNA stretch occupies residues 314-440 (ETTGKEVDLK…GEISRRALSG (127 aa)).

Belongs to the DnaA family. As to quaternary structure, oligomerizes as a right-handed, spiral filament on DNA at oriC.

The protein resides in the cytoplasm. Plays an essential role in the initiation and regulation of chromosomal replication. ATP-DnaA binds to the origin of replication (oriC) to initiate formation of the DNA replication initiation complex once per cell cycle. Binds the DnaA box (a 9 base pair repeat at the origin) and separates the double-stranded (ds)DNA. Forms a right-handed helical filament on oriC DNA; dsDNA binds to the exterior of the filament while single-stranded (ss)DNA is stabiized in the filament's interior. The ATP-DnaA-oriC complex binds and stabilizes one strand of the AT-rich DNA unwinding element (DUE), permitting loading of DNA polymerase. After initiation quickly degrades to an ADP-DnaA complex that is not apt for DNA replication. Binds acidic phospholipids. This chain is Chromosomal replication initiator protein DnaA, found in Thermotoga sp. (strain RQ2).